A 108-amino-acid polypeptide reads, in one-letter code: uncharacterized protein (108 aa).

The disordered stretch occupies residues Met1–Leu23.

This is an uncharacterized protein from Ureaplasma parvum serovar 3 (strain ATCC 700970).